The sequence spans 699 residues: SPS-sensor serine protease component SSY5 (699 aa).

Disordered regions lie at residues 1-113 and 129-158; these read MVRF…LQGF and VKEEESQDTQNTLDVSSSTSSTLATSGNAR. Positions 1-381 are excised as a propeptide; it reads MVRFFGLNKE…YCVKDYIKKA (381 aa). Basic and acidic residues predominate over residues 8-18; it reads NKEKNEEKENT. The segment covering 24–38 has biased composition (polar residues); that stretch reads NEQNAAETSSSNVSG. The span at 39–51 shows a compositional bias: basic and acidic residues; it reads NEERIDPNSRDTN. The segment covering 61 to 78 has biased composition (low complexity); that stretch reads STTFGSSIQSSSIFSRGR. Positions 83–93 are enriched in polar residues; it reads TGASSSMATSE. Over residues 144-154 the composition is skewed to low complexity; the sequence is SSSTSSTLATS. Residues 459-699 are serine protease; that stretch reads FAITCAHVVL…QWDIDPQLDG (241 aa). Residues histidine 465, aspartate 545, and serine 640 each act as charge relay system in the active site.

Belongs to the peptidase S64 family. Component of the plasma membrane SPS (SSY1-PTR3-SSY5) amino acid sensor complex. In terms of processing, the propeptide is autoproteolytically cleaved from the catalytic domain but remains associated, forming an inactive protease complex. This processing occurs even in the absence of signaling.

The protein resides in the cell membrane. Functionally, protease component of the SPS-sensor system, which regulates the expression of several amino acid-metabolizing enzymes and amino acid- and peptide-permeases in response to extracellular amino acid levels by controlling the activity of two transcription factors, STP1 and STP2. Catalyzes the activation of these transcription factors, which are synthesized as latent cytoplasmic precursors, by proteolytic removal of an N-terminal inhibitory domain containing cytoplasmic retention motifs. SSY5 binds as an inactive protease complex to STP1. In response to extracellular amino acids and dependent on the other SPS-sensor components, the inhibitory propeptide is induced to dissociate, and thereby enables the catalytic domain to process STP1. This chain is SPS-sensor serine protease component SSY5 (SSY5), found in Saccharomyces cerevisiae (strain AWRI1631) (Baker's yeast).